The chain runs to 177 residues: uncharacterized protein (177 aa).

The protein to B.subtilis YutG.

This is an uncharacterized protein from Bacillus subtilis (strain 168).